We begin with the raw amino-acid sequence, 242 residues long: Octanoyltransferase (242 aa).

Positions 31-206 (SQTTDEIWFL…LFLKNFGYNQ (176 aa)) constitute a BPL/LPL catalytic domain. Residues 70-77 (RGGQVTYH), 137-139 (SIG), and 150-152 (GLA) each bind substrate. The active-site Acyl-thioester intermediate is the Cys168.

The protein belongs to the LipB family.

The protein localises to the cytoplasm. It carries out the reaction octanoyl-[ACP] + L-lysyl-[protein] = N(6)-octanoyl-L-lysyl-[protein] + holo-[ACP] + H(+). It participates in protein modification; protein lipoylation via endogenous pathway; protein N(6)-(lipoyl)lysine from octanoyl-[acyl-carrier-protein]: step 1/2. Its function is as follows. Catalyzes the transfer of endogenously produced octanoic acid from octanoyl-acyl-carrier-protein onto the lipoyl domains of lipoate-dependent enzymes. Lipoyl-ACP can also act as a substrate although octanoyl-ACP is likely to be the physiological substrate. The protein is Octanoyltransferase of Coxiella burnetii (strain CbuK_Q154) (Coxiella burnetii (strain Q154)).